A 519-amino-acid chain; its full sequence is MLRAALSTARRGPRLSRLLSAAATSAVPAPNQQPEVFCNQIFINNEWHDAVSKKTFPTVNPSTGEVICQVAEGNKEDVDKAVKAAQAAFQLGSPWRRMDASDRGRLLYRLADLIERDRTYLAALETLDNGKPYVISYLVDLDMVLKCLRYYAGWADKYHGKTIPIDGDFFSYTRHEPVGVCGQIIPWNFPLLMQAWKLGPALATGNVVVMKVAEQTPLTALYVANLIKEAGFPPGVVNIVPGFGPTAGAAIASHEDVDKVAFTGSTEVGHLIQVAAGSSNLKRVTLELGGKSPNIIMSDADMDWAVEQAHFALFFNQGQCCCAGSRTFVQEDVYDEFVERSVARAKSRVVGNPFDSRTEQGPQVDETQFKKILGYIKSGQQEGAKLLCGGGAAADRGYFIQPTVFGDVKDGMTIAKEEIFGPVMQILKFKTIEEVVGRANNSKYGLAAAVFTKDLDKANYLSQALQAGTVWINCYDVFGAQSPFGGYKMSGSGRELGEYGLQAYTEVKTVTVKVPQKNS.

Residues 1–19 constitute a mitochondrion transit peptide; it reads MLRAALSTARRGPRLSRLL. The SIFI-degron signature appears at 12 to 26; it reads GPRLSRLLSAAATSA. An N6-acetyllysine mark is found at K54, K75, K80, and K161. Residue 264 to 269 coordinates NAD(+); the sequence is GSTEVG. E287 (proton acceptor) is an active-site residue. C321 functions as the Nucleophile in the catalytic mechanism. N6-acetyllysine is present on residues K370, K377, K385, K409, K428, K430, K443, and K453.

Belongs to the aldehyde dehydrogenase family. As to quaternary structure, homotetramer. In terms of processing, in response to mitochondrial stress, the precursor protein is ubiquitinated by the SIFI complex in the cytoplasm before mitochondrial import, leading to its degradation. Within the SIFI complex, UBR4 initiates ubiquitin chain that are further elongated or branched by KCMF1.

The protein localises to the mitochondrion matrix. The enzyme catalyses an aldehyde + NAD(+) + H2O = a carboxylate + NADH + 2 H(+). It functions in the pathway alcohol metabolism; ethanol degradation; acetate from ethanol: step 2/2. In terms of biological role, required for clearance of cellular formaldehyde, a cytotoxic and carcinogenic metabolite that induces DNA damage. In Rattus norvegicus (Rat), this protein is Aldehyde dehydrogenase, mitochondrial (Aldh2).